Consider the following 349-residue polypeptide: DNA integrity scanning protein DisA (349 aa).

The region spanning 3–143 (KQDLMDIIVK…LKYRLKNFDE (141 aa)) is the DAC domain. ATP is bound by residues Gly70, Val88, and 101 to 105 (TRHRT).

This sequence belongs to the DisA family. As to quaternary structure, homooctamer. Requires Mg(2+) as cofactor.

The catalysed reaction is 2 ATP = 3',3'-c-di-AMP + 2 diphosphate. Participates in a DNA-damage check-point. DisA forms globular foci that rapidly scan along the chromosomes searching for lesions. Functionally, also has diadenylate cyclase activity, catalyzing the condensation of 2 ATP molecules into cyclic di-AMP (c-di-AMP). c-di-AMP likely acts as a signaling molecule that may couple DNA integrity with a cellular process. This chain is DNA integrity scanning protein DisA, found in Fusobacterium nucleatum subsp. nucleatum (strain ATCC 25586 / DSM 15643 / BCRC 10681 / CIP 101130 / JCM 8532 / KCTC 2640 / LMG 13131 / VPI 4355).